The sequence spans 168 residues: Small ribosomal subunit protein uS9 (168 aa).

Low complexity predominate over residues 1-11 (MAQNEELTTEA). Residues 1–36 (MAQNEELTTEAVEAEENPTSYTSESSAAEAAPKKER) form a disordered region.

The protein belongs to the universal ribosomal protein uS9 family.

This is Small ribosomal subunit protein uS9 from Pseudarthrobacter chlorophenolicus (strain ATCC 700700 / DSM 12829 / CIP 107037 / JCM 12360 / KCTC 9906 / NCIMB 13794 / A6) (Arthrobacter chlorophenolicus).